The chain runs to 257 residues: Cilia- and flagella-associated protein 300 (257 aa).

Belongs to the CFAP300 family.

It localises to the cytoplasm. The protein resides in the cytoskeleton. The protein localises to the flagellum axoneme. Its function is as follows. Cilium- and flagellum-specific protein that plays a role in axonemal structure organization and motility. Plays a role in outer and inner dynein arm assembly. The chain is Cilia- and flagella-associated protein 300 from Chlamydomonas reinhardtii (Chlamydomonas smithii).